We begin with the raw amino-acid sequence, 227 residues long: NADH-quinone oxidoreductase subunit C (227 aa).

The protein belongs to the complex I 30 kDa subunit family. NDH-1 is composed of 14 different subunits. Subunits NuoB, C, D, E, F, and G constitute the peripheral sector of the complex.

The protein localises to the cell inner membrane. The enzyme catalyses a quinone + NADH + 5 H(+)(in) = a quinol + NAD(+) + 4 H(+)(out). NDH-1 shuttles electrons from NADH, via FMN and iron-sulfur (Fe-S) centers, to quinones in the respiratory chain. The immediate electron acceptor for the enzyme in this species is believed to be ubiquinone. Couples the redox reaction to proton translocation (for every two electrons transferred, four hydrogen ions are translocated across the cytoplasmic membrane), and thus conserves the redox energy in a proton gradient. The sequence is that of NADH-quinone oxidoreductase subunit C from Coxiella burnetii (strain Dugway 5J108-111).